A 266-amino-acid polypeptide reads, in one-letter code: Tryptophan synthase alpha chain (266 aa).

Active-site proton acceptor residues include Glu-51 and Asp-62.

Belongs to the TrpA family. Tetramer of two alpha and two beta chains.

It carries out the reaction (1S,2R)-1-C-(indol-3-yl)glycerol 3-phosphate + L-serine = D-glyceraldehyde 3-phosphate + L-tryptophan + H2O. It participates in amino-acid biosynthesis; L-tryptophan biosynthesis; L-tryptophan from chorismate: step 5/5. The alpha subunit is responsible for the aldol cleavage of indoleglycerol phosphate to indole and glyceraldehyde 3-phosphate. The chain is Tryptophan synthase alpha chain from Thermosynechococcus vestitus (strain NIES-2133 / IAM M-273 / BP-1).